The primary structure comprises 444 residues: ATP-dependent protease ATPase subunit HslU (444 aa).

ATP-binding positions include isoleucine 20 and 62–67 (GVGKTE). The tract at residues 137–162 (LVPPSRGTSGEPERGEDSNARQTFRK) is disordered. Residues aspartate 257, glutamate 322, and arginine 394 each contribute to the ATP site.

Belongs to the ClpX chaperone family. HslU subfamily. In terms of assembly, a double ring-shaped homohexamer of HslV is capped on each side by a ring-shaped HslU homohexamer. The assembly of the HslU/HslV complex is dependent on binding of ATP.

It localises to the cytoplasm. Functionally, ATPase subunit of a proteasome-like degradation complex; this subunit has chaperone activity. The binding of ATP and its subsequent hydrolysis by HslU are essential for unfolding of protein substrates subsequently hydrolyzed by HslV. HslU recognizes the N-terminal part of its protein substrates and unfolds these before they are guided to HslV for hydrolysis. In Bordetella petrii (strain ATCC BAA-461 / DSM 12804 / CCUG 43448), this protein is ATP-dependent protease ATPase subunit HslU.